The following is a 193-amino-acid chain: Phosphoheptose isomerase (193 aa).

Residues Leu37–Ala193 enclose the SIS domain. Position 52–54 (Asn52–Gly54) interacts with substrate. The Zn(2+) site is built by His61 and Glu65. Substrate contacts are provided by residues Glu65, Asn93–Asp94, Ser119–Ser121, Ser124, and Gln172. Positions 172 and 180 each coordinate Zn(2+).

This sequence belongs to the SIS family. GmhA subfamily. In terms of assembly, homotetramer. Requires Zn(2+) as cofactor.

The protein resides in the cytoplasm. The enzyme catalyses 2 D-sedoheptulose 7-phosphate = D-glycero-alpha-D-manno-heptose 7-phosphate + D-glycero-beta-D-manno-heptose 7-phosphate. Its pathway is carbohydrate biosynthesis; D-glycero-D-manno-heptose 7-phosphate biosynthesis; D-glycero-alpha-D-manno-heptose 7-phosphate and D-glycero-beta-D-manno-heptose 7-phosphate from sedoheptulose 7-phosphate: step 1/1. Its function is as follows. Catalyzes the isomerization of sedoheptulose 7-phosphate in D-glycero-D-manno-heptose 7-phosphate. In Serratia proteamaculans (strain 568), this protein is Phosphoheptose isomerase.